The sequence spans 304 residues: ATP synthase gamma chain (304 aa).

Belongs to the ATPase gamma chain family. As to quaternary structure, F-type ATPases have 2 components, CF(1) - the catalytic core - and CF(0) - the membrane proton channel. CF(1) has five subunits: alpha(3), beta(3), gamma(1), delta(1), epsilon(1). CF(0) has three main subunits: a, b and c.

It is found in the cell membrane. Its function is as follows. Produces ATP from ADP in the presence of a proton gradient across the membrane. The gamma chain is believed to be important in regulating ATPase activity and the flow of protons through the CF(0) complex. This is ATP synthase gamma chain from Chloroherpeton thalassium (strain ATCC 35110 / GB-78).